Consider the following 4144-residue polypeptide: DNA-dependent protein kinase catalytic subunit (4144 aa).

Lys-127 carries the N6-acetyllysine modification. One copy of the HEAT 1 repeat lies at 298–333 (DNYVSLFEVLSKWCSHTNVEMKKAAHSALESFLKQV). Phosphoserine occurs at positions 521, 851, and 903. An HEAT 2 repeat occupies 1014 to 1050 (QDTVALLETILDGIVDPVDSTLRDFCGRCIREFLKWS). Ser-1075 is modified (phosphoserine). Lys-1219 is subject to N6-acetyllysine. The tract at residues 1516–1551 (LDPSCKRLASGLLELAFAFGGLCEHLVDLLLDTAVL) is interaction with C1D. The tract at residues 1516–1551 (LDPSCKRLASGLLELAFAFGGLCEHLVDLLLDTAVL) is leucine-zipper. One copy of the TPR 1 repeat lies at 1736 to 1769 (PMKSEEFPVGTLRYSNYVDCMKKFLDALELSQSP). An N6-acetyllysine modification is found at Lys-1983. Position 2069 is a phosphoserine; by autocatalysis (Ser-2069). Lys-2271 is subject to N6-acetyllysine. The interval 2448–3228 (LDIIYKMMAK…DHSLSMDEER (781 aa)) is KIP-binding. At Thr-2547 the chain carries Phosphothreonine. Thr-2621 carries the post-translational modification Phosphothreonine; by autocatalysis. Ser-2624 carries the phosphoserine; by autocatalysis modification. A phosphothreonine; by autocatalysis mark is found at Thr-2650 and Thr-2659. Residues 2697–2729 (AQKRNEKSQRAPLKSVGPDFGEKKLGLPGDKVD) are disordered. Over residues 2716–2729 (FGEKKLGLPGDKVD) the composition is skewed to basic and acidic residues. A may split the end of the DNA molecule, with the two strands separating around the region region spans residues 2753–2781 (EKLSLIYARKGIAEQKREKEIKSELKMKH). Ser-2805 is subject to Phosphoserine. TPR repeat units lie at residues 2903–2935 (PVGVRLLEEALLHLGPQEPPAKQFKGRMRVSPD), 2936–2964 (VVRWMELAKLYRSIGEYDILRGIFSSEIG), and 2965–2998 (TKQITQSAIFAEARSDYSEAAKQYNEALNKEEWV). The 634-residue stretch at 2922–3555 (PAKQFKGRMR…VYPFIISSES (634 aa)) folds into the FAT domain. At Ser-3221 the chain carries Phosphoserine. N6-acetyllysine is present on residues Lys-3257, Lys-3276, Lys-3654, and Lys-3658. Residues 3711–3748 (LRNELEIPGQYDGKGKPLPEYHARIAGFDERIKVMASI) form a TPR 5 repeat. One can recognise a PI3K/PI4K catalytic domain in the interval 3738–4069 (FDERIKVMAS…IHYAKRKLAG (332 aa)). Positions 3744 to 3750 (VMASIRK) are G-loop. Phosphoserine occurs at positions 3747 and 3837. The segment at 3935–3943 (GIGDRHLNN) is catalytic loop. Residues 3955–3980 (GIDFGHAFGSATQFLPVPELMPFRLT) form an activation loop region. Residue Ser-4042 is modified to Phosphoserine. Positions 4112 to 4144 (NGLSEEAQVKCLIDQATDPNILGRTWIGWEPWM) constitute an FATC domain.

This sequence belongs to the PI3/PI4-kinase family. In terms of assembly, DNA-PK is a heterotrimer of PRKDC and the Ku dimer (composed of XRCC6/Ku70 and XRCC5/Ku86). Formation of this complex may be promoted by interaction with ILF3. Component of the core long-range non-homologous end joining (NHEJ) complex (also named DNA-PK complex) composed of PRKDC, LIG4, XRCC4, XRCC6/Ku70, XRCC5/Ku86 and NHEJ1/XLF. Additional component of the NHEJ complex includes PAXX. Following autophosphorylation, PRKDC dissociates from DNA. Interacts with DNA-PKcs-interacting protein (KIP) with the region upstream the kinase domain. PRKDC alone also interacts with and phosphorylates DCLRE1C, thereby activating the latent endonuclease activity of this protein. Interacts with C1D. Interacts with TTI1 and TELO2. Interacts with CIB1. Interacts with SETX. Interacts with NR4A3; the DNA-dependent protein kinase complex DNA-PK phosphorylates and activates NR4A3 and prevents NR4A3 ubiquitination and degradation. Interacts with BRAT1. Part of the HDP-RNP complex composed of at least HEXIM1, PRKDC, XRCC5, XRCC6, paraspeckle proteins (SFPQ, NONO, PSPC1, RBM14, and MATR3) and NEAT1 RNA. Interacts with KAT5. Autophosphorylated at two clusters, the T2609 cluster and the S2056 cluster. Autophosphorylated on Ser-2069, Thr-2621, Thr-2650 and Thr-2659. Ser-2069 and Thr-2621 are DNA damage-inducible phosphorylation sites (inducible with ionizing radiation, IR) dephosphorylated by PPP5C. Autophosphorylation induces a conformational change that leads to remodeling of the DNA-PK complex, requisite for efficient end processing and DNA repair. Autophosphorylation in trans within DNA-PK complexes loaded on DNA ends leads to the dissociation of PRKDC from DNA and the transition into the short-range NHEJ complex. Autophosphorylation of the T2609 cluster is required for hematopoietic development and protein synthesis in erythrocytes precursors. In terms of processing, S-nitrosylated by GAPDH. Post-translationally, polyubiquitinated by RNF144A, leading to proteasomal degradation.

It is found in the nucleus. It localises to the nucleolus. The protein localises to the cytoplasm. The protein resides in the cytosol. It catalyses the reaction L-seryl-[protein] + ATP = O-phospho-L-seryl-[protein] + ADP + H(+). The enzyme catalyses L-threonyl-[protein] + ATP = O-phospho-L-threonyl-[protein] + ADP + H(+). Its activity is regulated as follows. Activity seems to be attenuated by autophosphorylation. Binding to the SL1 region of U3 small nucleolar RNA promotes auto-phosphorylation activity. Inhibited by wortmannin. Its function is as follows. Serine/threonine-protein kinase that acts as a molecular sensor for DNA damage. Involved in DNA non-homologous end joining (NHEJ) required for double-strand break (DSB) repair and V(D)J recombination. Must be bound to DNA to express its catalytic properties. Promotes processing of hairpin DNA structures in V(D)J recombination by activation of the hairpin endonuclease artemis (DCLRE1C). Recruited by XRCC5 and XRCC6 to DNA ends and is required to (1) protect and align broken ends of DNA, thereby preventing their degradation, (2) and sequester the DSB for repair by NHEJ. Acts as a scaffold protein to aid the localization of DNA repair proteins to the site of damage. The assembly of the DNA-PK complex at DNA ends is also required for the NHEJ ligation step. Found at the ends of chromosomes, suggesting a further role in the maintenance of telomeric stability and the prevention of chromosomal end fusion. Also involved in modulation of transcription. As part of the DNA-PK complex, involved in the early steps of ribosome assembly by promoting the processing of precursor rRNA into mature 18S rRNA in the small-subunit processome. Binding to U3 small nucleolar RNA, recruits PRKDC and XRCC5/Ku86 to the small-subunit processome. Recognizes the substrate consensus sequence [ST]-Q. Phosphorylates 'Ser-139' of histone variant H2AX, thereby regulating DNA damage response mechanism. Phosphorylates ASF1A, DCLRE1C, c-Abl/ABL1, histone H1, HSPCA, c-jun/JUN, p53/TP53, PARP1, POU2F1, DHX9, FH, SRF, NHEJ1/XLF, XRCC1, XRCC4, XRCC5, XRCC6, WRN, MYC and RFA2. Can phosphorylate C1D not only in the presence of linear DNA but also in the presence of supercoiled DNA. Ability to phosphorylate p53/TP53 in the presence of supercoiled DNA is dependent on C1D. Acts as a regulator of the phosphatidylinositol 3-kinase/protein kinase B signal transduction by mediating phosphorylation of 'Ser-473' of protein kinase B (PKB/AKT1, PKB/AKT2, PKB/AKT3), promoting their activation. Contributes to the determination of the circadian period length by antagonizing phosphorylation of CRY1 'Ser-588' and increasing CRY1 protein stability, most likely through an indirect mechanism. Plays a role in the regulation of DNA virus-mediated innate immune response by assembling into the HDP-RNP complex, a complex that serves as a platform for IRF3 phosphorylation and subsequent innate immune response activation through the cGAS-STING pathway. Also regulates the cGAS-STING pathway by catalyzing phosphorylation of CGAS, thereby impairing CGAS oligomerization and activation. Also regulates the cGAS-STING pathway by mediating phosphorylation of PARP1. This is DNA-dependent protein kinase catalytic subunit (PRKDC) from Canis lupus familiaris (Dog).